A 311-amino-acid polypeptide reads, in one-letter code: 4-hydroxy-tetrahydrodipicolinate synthase (311 aa).

Residue threonine 51 participates in pyruvate binding. Tyrosine 140 functions as the Proton donor/acceptor in the catalytic mechanism. The active-site Schiff-base intermediate with substrate is lysine 168. Position 209 (isoleucine 209) interacts with pyruvate.

It belongs to the DapA family. Homotetramer; dimer of dimers.

The protein localises to the cytoplasm. The catalysed reaction is L-aspartate 4-semialdehyde + pyruvate = (2S,4S)-4-hydroxy-2,3,4,5-tetrahydrodipicolinate + H2O + H(+). Its pathway is amino-acid biosynthesis; L-lysine biosynthesis via DAP pathway; (S)-tetrahydrodipicolinate from L-aspartate: step 3/4. Catalyzes the condensation of (S)-aspartate-beta-semialdehyde [(S)-ASA] and pyruvate to 4-hydroxy-tetrahydrodipicolinate (HTPA). This chain is 4-hydroxy-tetrahydrodipicolinate synthase, found in Streptococcus pneumoniae (strain Hungary19A-6).